Reading from the N-terminus, the 256-residue chain is Fumarate reductase iron-sulfur subunit (256 aa).

One can recognise a 2Fe-2S ferredoxin-type domain in the interval 7 to 97 (MNVEVLRYNP…HMRIEPLANF (91 aa)). Tyr-14 contacts a menaquinone. [2Fe-2S] cluster-binding residues include Cys-58, Cys-63, Cys-66, and Cys-78. The region spanning 151–180 (LEKYRQFSMCINCGLCYAACPQFGLNPEFL) is the 4Fe-4S ferredoxin-type domain. 3 residues coordinate [4Fe-4S] cluster: Cys-160, Cys-163, and Cys-166. 3 residues coordinate [3Fe-4S] cluster: Cys-170, Cys-216, and Cys-222. [4Fe-4S] cluster is bound at residue Cys-226. Residue 237 to 240 (NQGK) coordinates a menaquinone.

Belongs to the succinate dehydrogenase/fumarate reductase iron-sulfur protein family. Fumarate dehydrogenase forms part of an enzyme complex containing four subunits: a flavoprotein, an iron-sulfur, and two hydrophobic anchor proteins. [2Fe-2S] cluster serves as cofactor. Requires [3Fe-4S] cluster as cofactor. The cofactor is [4Fe-4S] cluster.

Its subcellular location is the cell inner membrane. It carries out the reaction a quinone + succinate = fumarate + a quinol. It catalyses the reaction a menaquinone + succinate = a menaquinol + fumarate. The sequence is that of Fumarate reductase iron-sulfur subunit (frdB) from Haemophilus influenzae (strain ATCC 51907 / DSM 11121 / KW20 / Rd).